We begin with the raw amino-acid sequence, 927 residues long: Isoleucine--tRNA ligase (927 aa).

The 'HIGH' region motif lies at 60–70; that stretch reads PYANGNIHLGH. Residue E557 participates in L-isoleucyl-5'-AMP binding. The short motif at 598–602 is the 'KMSKS' region element; it reads KMSKS. K601 is an ATP binding site. The Zn(2+) site is built by C895, C898, C915, and C918.

The protein belongs to the class-I aminoacyl-tRNA synthetase family. IleS type 1 subfamily. Monomer. The cofactor is Zn(2+).

The protein resides in the cytoplasm. The enzyme catalyses tRNA(Ile) + L-isoleucine + ATP = L-isoleucyl-tRNA(Ile) + AMP + diphosphate. Catalyzes the attachment of isoleucine to tRNA(Ile). As IleRS can inadvertently accommodate and process structurally similar amino acids such as valine, to avoid such errors it has two additional distinct tRNA(Ile)-dependent editing activities. One activity is designated as 'pretransfer' editing and involves the hydrolysis of activated Val-AMP. The other activity is designated 'posttransfer' editing and involves deacylation of mischarged Val-tRNA(Ile). The protein is Isoleucine--tRNA ligase of Syntrophomonas wolfei subsp. wolfei (strain DSM 2245B / Goettingen).